The sequence spans 118 residues: NADH-quinone oxidoreductase subunit A (118 aa).

3 consecutive transmembrane segments (helical) span residues 8 to 28 (IGIF…LAFF), 64 to 84 (ALAF…AVAF), and 87 to 107 (VGLY…AGLL).

Belongs to the complex I subunit 3 family. In terms of assembly, NDH-1 is composed of 14 different subunits. Subunits NuoA, H, J, K, L, M, N constitute the membrane sector of the complex.

The protein resides in the cell membrane. The catalysed reaction is a quinone + NADH + 5 H(+)(in) = a quinol + NAD(+) + 4 H(+)(out). In terms of biological role, NDH-1 shuttles electrons from NADH, via FMN and iron-sulfur (Fe-S) centers, to quinones in the respiratory chain. The immediate electron acceptor for the enzyme in this species is believed to be ubiquinone. Couples the redox reaction to proton translocation (for every two electrons transferred, four hydrogen ions are translocated across the cytoplasmic membrane), and thus conserves the redox energy in a proton gradient. In Chloroflexus aurantiacus (strain ATCC 29366 / DSM 635 / J-10-fl), this protein is NADH-quinone oxidoreductase subunit A.